We begin with the raw amino-acid sequence, 503 residues long: Aspartyl/glutamyl-tRNA(Asn/Gln) amidotransferase subunit B (503 aa).

This sequence belongs to the GatB/GatE family. GatB subfamily. Heterotrimer of A, B and C subunits.

It catalyses the reaction L-glutamyl-tRNA(Gln) + L-glutamine + ATP + H2O = L-glutaminyl-tRNA(Gln) + L-glutamate + ADP + phosphate + H(+). It carries out the reaction L-aspartyl-tRNA(Asn) + L-glutamine + ATP + H2O = L-asparaginyl-tRNA(Asn) + L-glutamate + ADP + phosphate + 2 H(+). Functionally, allows the formation of correctly charged Asn-tRNA(Asn) or Gln-tRNA(Gln) through the transamidation of misacylated Asp-tRNA(Asn) or Glu-tRNA(Gln) in organisms which lack either or both of asparaginyl-tRNA or glutaminyl-tRNA synthetases. The reaction takes place in the presence of glutamine and ATP through an activated phospho-Asp-tRNA(Asn) or phospho-Glu-tRNA(Gln). In Cereibacter sphaeroides (strain ATCC 17023 / DSM 158 / JCM 6121 / CCUG 31486 / LMG 2827 / NBRC 12203 / NCIMB 8253 / ATH 2.4.1.) (Rhodobacter sphaeroides), this protein is Aspartyl/glutamyl-tRNA(Asn/Gln) amidotransferase subunit B.